The primary structure comprises 97 residues: Cysteine-rich and transmembrane domain-containing protein 1 (97 aa).

The segment covering 1–40 has biased composition (pro residues); that stretch reads MNQENPPPYPGPGPTAPYPPYPPQPMGPGPMGGPYPPPQG. Positions 1–61 are disordered; the sequence is MNQENPPPYP…QGGPQEPPKT (61 aa). A compositionally biased stretch (low complexity) spans 41-50; the sequence is YPYQGYPQYG. Residues 74-91 traverse the membrane as a helical segment; the sequence is LGPSTCLTACWTALCCCC.

Belongs to the CYSTM1 family.

Its subcellular location is the membrane. In Homo sapiens (Human), this protein is Cysteine-rich and transmembrane domain-containing protein 1 (CYSTM1).